Consider the following 620-residue polypeptide: Rhamnogalacturonan endolyase YesW (620 aa).

The first 37 residues, M1–G37, serve as a signal peptide directing secretion. The segment at L133 to N152 is disordered. N152 contacts substrate. 6 residues coordinate Ca(2+): D153, D158, D160, D162, Q164, and E166. D172 provides a ligand contact to substrate. D187 and K207 together coordinate a carbohydrate. Positions 222, 224, 226, 228, and 230 each coordinate Ca(2+). A carbohydrate-binding residues include G238 and R255. 16 residues coordinate Ca(2+): H363, D369, D371, D373, K375, E377, D386, H387, H399, D401, D407, D409, R412, G414, E416, and E422. R452 is a substrate binding site. Ca(2+)-binding residues include D457, D459, Y462, G464, E466, D496, D498, L500, and E502. Residue N532–T534 coordinates substrate. Ca(2+)-binding residues include D543, L545, D547, R549, E551, N592, and A594. Y595 contributes to the substrate binding site. N596 is a binding site for Ca(2+).

The protein belongs to the polysaccharide lyase 11 family. In terms of assembly, monomer. Ca(2+) is required as a cofactor. It depends on Mn(2+) as a cofactor.

It localises to the secreted. The catalysed reaction is Endotype eliminative cleavage of L-alpha-rhamnopyranosyl-(1-&gt;4)-alpha-D-galactopyranosyluronic acid bonds of rhamnogalacturonan I domains in ramified hairy regions of pectin leaving L-rhamnopyranose at the reducing end and 4-deoxy-4,5-unsaturated D-galactopyranosyluronic acid at the non-reducing end.. Functionally, pectinolytic enzyme that degrades type I rhamnogalacturonan from plant cell walls and releases oligosaccharide products. Degrades rhamnogalacturonan, polygalacturonic acid, pectic acid and pectin. In Bacillus subtilis (strain 168), this protein is Rhamnogalacturonan endolyase YesW (yesW).